An 828-amino-acid polypeptide reads, in one-letter code: Periplasmic nitrate reductase (828 aa).

Positions Met-1–Ala-31 form a signal peptide, tat-type signal. The 4Fe-4S Mo/W bis-MGD-type domain maps to Ile-39–Asp-95. Cys-46, Cys-49, Cys-53, and Cys-81 together coordinate [4Fe-4S] cluster. Mo-bis(molybdopterin guanine dinucleotide) is bound by residues Lys-83, Gln-150, Asn-175, Cys-179, Trp-212–Met-219, Ser-243–His-247, Gln-262–Asp-264, Met-372, Gln-376, Asn-482, Ser-508–Asp-509, Lys-531, Asp-558, and Thr-718–Thr-727. Phe-794 contributes to the substrate binding site. 2 residues coordinate Mo-bis(molybdopterin guanine dinucleotide): Asn-802 and Lys-819.

The protein belongs to the prokaryotic molybdopterin-containing oxidoreductase family. NasA/NapA/NarB subfamily. Component of the periplasmic nitrate reductase NapAB complex composed of NapA and NapB. Requires [4Fe-4S] cluster as cofactor. Mo-bis(molybdopterin guanine dinucleotide) is required as a cofactor. In terms of processing, predicted to be exported by the Tat system. The position of the signal peptide cleavage has not been experimentally proven.

The protein resides in the periplasm. The catalysed reaction is 2 Fe(II)-[cytochrome] + nitrate + 2 H(+) = 2 Fe(III)-[cytochrome] + nitrite + H2O. Functionally, catalytic subunit of the periplasmic nitrate reductase complex NapAB. Receives electrons from NapB and catalyzes the reduction of nitrate to nitrite. The polypeptide is Periplasmic nitrate reductase (Escherichia coli O8 (strain IAI1)).